A 158-amino-acid polypeptide reads, in one-letter code: 2S seed storage albumin protein (158 aa).

Residues 1-21 (MTKFTILLISLLFCIAHTCSA) form the signal peptide. Positions 54–56 (RGD) match the Cell attachment site motif. A propeptide spanning residues 65–81 (NHILRTMRGRINYIRRN) is cleaved from the precursor.

The protein belongs to the 2S seed storage albumins family. As to quaternary structure, the protein consists of two chains linked by 2 disulfide bonds. As to expression, expressed in cotyledons. Maximal expression in parenchyma cells undergoing DNA endoreduplication and cell expansion but not in actively dividing cells of the cotyledon.

Functionally, this is a 2S seed storage protein. Its function is as follows. Binds to mammalian chromatin, preventing the normal formation of the kinetochore complex in the centromere and leading to the disruption of mitosis. This is 2S seed storage albumin protein from Glycine max (Soybean).